The following is a 109-amino-acid chain: Large ribosomal subunit protein uL24 (109 aa).

It belongs to the universal ribosomal protein uL24 family. Part of the 50S ribosomal subunit.

In terms of biological role, one of two assembly initiator proteins, it binds directly to the 5'-end of the 23S rRNA, where it nucleates assembly of the 50S subunit. One of the proteins that surrounds the polypeptide exit tunnel on the outside of the subunit. The polypeptide is Large ribosomal subunit protein uL24 (Rickettsia bellii (strain RML369-C)).